The primary structure comprises 188 residues: Crossover junction endodeoxyribonuclease RuvC (188 aa).

Residues Asp7, Glu68, and Asp141 contribute to the active site. The Mg(2+) site is built by Asp7, Glu68, and Asp141.

The protein belongs to the RuvC family. Homodimer which binds Holliday junction (HJ) DNA. The HJ becomes 2-fold symmetrical on binding to RuvC with unstacked arms; it has a different conformation from HJ DNA in complex with RuvA. In the full resolvosome a probable DNA-RuvA(4)-RuvB(12)-RuvC(2) complex forms which resolves the HJ. Mg(2+) serves as cofactor.

Its subcellular location is the cytoplasm. The catalysed reaction is Endonucleolytic cleavage at a junction such as a reciprocal single-stranded crossover between two homologous DNA duplexes (Holliday junction).. The RuvA-RuvB-RuvC complex processes Holliday junction (HJ) DNA during genetic recombination and DNA repair. Endonuclease that resolves HJ intermediates. Cleaves cruciform DNA by making single-stranded nicks across the HJ at symmetrical positions within the homologous arms, yielding a 5'-phosphate and a 3'-hydroxyl group; requires a central core of homology in the junction. The consensus cleavage sequence is 5'-(A/T)TT(C/G)-3'. Cleavage occurs on the 3'-side of the TT dinucleotide at the point of strand exchange. HJ branch migration catalyzed by RuvA-RuvB allows RuvC to scan DNA until it finds its consensus sequence, where it cleaves and resolves the cruciform DNA. This Mycobacterium avium (strain 104) protein is Crossover junction endodeoxyribonuclease RuvC.